We begin with the raw amino-acid sequence, 491 residues long: Delayed-rectifier potassium channel regulatory subunit KCNS3 (491 aa).

Topologically, residues 1–182 are cytoplasmic; the sequence is MVFGEFFHRP…IRMENPAYCL (182 aa). Residues 183-204 traverse the membrane as a helical segment; it reads SAKLIAISSLSVVLASIVAMCV. The Extracellular segment spans residues 205–220; the sequence is HSMSEFQNEDGEVDDP. The helical transmembrane segment at 221–243 threads the bilayer; sequence VLEGVEIACIAWFTGELAVRLAA. Over 244-254 the chain is Cytoplasmic; it reads APCQKKFWKNP. A helical membrane pass occupies residues 255 to 275; that stretch reads LNIIDFVSIIPFYATLAVDTK. Over 276–285 the chain is Extracellular; it reads EEESEDIENM. Residues 286 to 306 form a helical; Voltage-sensor membrane-spanning segment; it reads GKVVQILRLMRIFRILKLARH. Residues 307–321 lie on the Cytoplasmic side of the membrane; sequence SVGLRSLGATLRHSY. A helical membrane pass occupies residues 322–343; sequence HEVGLLLLFLSVGISIFSVLIY. Residues 344 to 357 lie on the Extracellular side of the membrane; the sequence is SVEKDDHTSSLTSI. Positions 358–369 form an intramembrane region, helical; sequence PICWWWATISMT. The Selectivity filter signature appears at 370–375; it reads TVGYGD. An intramembrane segment occupies 370-377; sequence TVGYGDTH. The Extracellular segment spans residues 378–384; it reads PVTLAGK. The chain crosses the membrane as a helical span at residues 385 to 413; it reads LIASTCIICGILVVALPITIIFNKFSKYY. Residues 414 to 491 are Cytoplasmic-facing; sequence QKQKDIDVDQ…TTSLENCTAK (78 aa).

It belongs to the potassium channel family. S (TC 1.A.1.2) subfamily. Kv9.3/KCNS3 sub-subfamily. Heterotetramer with KCNB1. Does not form homomultimers. Detected in whole normal term placental and placental chorionic plate arteries and veins. Detected in syncytiotrophoblast and in blood vessel endothelium within intermediate villi and chorionic plate (at protein level). Detected in most tissues, but not in peripheral blood lymphocytes. The highest levels of expression are in lung.

Its subcellular location is the cell membrane. Potassium channel regulatory subunit that modulates the delayed rectifier potassium channel activity of KCNB1 by namely slowing down the deactivation and inactivation time constants. While it does not form functional channel on its own, it can form functional heterotetrameric channels with KCNB1. This Homo sapiens (Human) protein is Delayed-rectifier potassium channel regulatory subunit KCNS3.